The following is a 428-amino-acid chain: Adenylosuccinate synthetase (428 aa).

Residues 12 to 18 (GDEGKGK) and 40 to 42 (GHT) contribute to the GTP site. Residue Asp13 is the Proton acceptor of the active site. Mg(2+)-binding residues include Asp13 and Gly40. IMP-binding positions include 13–16 (DEGK), 38–41 (NAGH), Thr130, Arg144, Gln225, Thr240, and Arg304. Residue His41 is the Proton donor of the active site. 300–306 (VTTGRAR) contacts substrate. GTP contacts are provided by residues Arg306, 332–334 (KID), and 414–416 (SVG).

Belongs to the adenylosuccinate synthetase family. Homodimer. Mg(2+) serves as cofactor.

Its subcellular location is the cytoplasm. The catalysed reaction is IMP + L-aspartate + GTP = N(6)-(1,2-dicarboxyethyl)-AMP + GDP + phosphate + 2 H(+). It participates in purine metabolism; AMP biosynthesis via de novo pathway; AMP from IMP: step 1/2. In terms of biological role, plays an important role in the de novo pathway of purine nucleotide biosynthesis. Catalyzes the first committed step in the biosynthesis of AMP from IMP. The polypeptide is Adenylosuccinate synthetase (Clostridium acetobutylicum (strain ATCC 824 / DSM 792 / JCM 1419 / IAM 19013 / LMG 5710 / NBRC 13948 / NRRL B-527 / VKM B-1787 / 2291 / W)).